The primary structure comprises 265 residues: Small ribosomal subunit protein uS2 (265 aa).

The segment at 226-265 (AAAPNSASVREEEFSAESADEGKGRRAPAKKGDKKADAAE) is disordered. The span at 245 to 265 (DEGKGRRAPAKKGDKKADAAE) shows a compositional bias: basic and acidic residues.

The protein belongs to the universal ribosomal protein uS2 family.

This Xanthomonas euvesicatoria pv. vesicatoria (strain 85-10) (Xanthomonas campestris pv. vesicatoria) protein is Small ribosomal subunit protein uS2.